Consider the following 68-residue polypeptide: Medusin-AS (68 aa).

Residues 1–22 (MAFLKKSLFLVLFLGLVSLSVC) form the signal peptide. A propeptide spanning residues 23–49 (EEEKRESEEEKNEQEEDDRDERSEEKR) is cleaved from the precursor. The disordered stretch occupies residues 24 to 46 (EEKRESEEEKNEQEEDDRDERSE). The span at 31 to 41 (EEKNEQEEDDR) shows a compositional bias: acidic residues. Leu67 carries the leucine amide modification.

It belongs to the frog skin active peptide (FSAP) family. Medusin subfamily. In terms of tissue distribution, expressed by the skin glands.

Its subcellular location is the secreted. In terms of biological role, antimicrobial peptide active against Gram-positive bacteria and fungi but inactive against Gram-negative bacteria. Also inhibits growth of B.dendrobatidis zoospores at high concentrations. Shows anticancer activities. Shows hemolytic activity. This is Medusin-AS from Agalychnis spurrelli (Gliding leaf frog).